The chain runs to 445 residues: GTPase Der (445 aa).

2 consecutive EngA-type G domains span residues 3-167 and 180-353; these read PVIA…YAGQ and IKIA…AAAM. Residues 9–16, 56–60, 119–122, 186–193, 233–237, and 298–301 contribute to the GTP site; these read GRPNVGKS, DTGGF, NKAE, DTAGL, and NKWD. In terms of domain architecture, KH-like spans 354-438; it reads AKLPTPKLTR…PLRIEFRSSN (85 aa).

The protein belongs to the TRAFAC class TrmE-Era-EngA-EngB-Septin-like GTPase superfamily. EngA (Der) GTPase family. Associates with the 50S ribosomal subunit.

In terms of biological role, GTPase that plays an essential role in the late steps of ribosome biogenesis. The polypeptide is GTPase Der (Burkholderia lata (strain ATCC 17760 / DSM 23089 / LMG 22485 / NCIMB 9086 / R18194 / 383)).